The chain runs to 188 residues: Elongation factor P (188 aa).

K34 bears the N6-(3,6-diaminohexanoyl)-5-hydroxylysine mark.

This sequence belongs to the elongation factor P family. In terms of processing, may be beta-lysylated on the epsilon-amino group of Lys-34 by the combined action of EpmA and EpmB, and then hydroxylated on the C5 position of the same residue by EpmC (if this protein is present). Lysylation is critical for the stimulatory effect of EF-P on peptide-bond formation. The lysylation moiety may extend toward the peptidyltransferase center and stabilize the terminal 3-CCA end of the tRNA. Hydroxylation of the C5 position on Lys-34 may allow additional potential stabilizing hydrogen-bond interactions with the P-tRNA.

It localises to the cytoplasm. It participates in protein biosynthesis; polypeptide chain elongation. Its function is as follows. Involved in peptide bond synthesis. Alleviates ribosome stalling that occurs when 3 or more consecutive Pro residues or the sequence PPG is present in a protein, possibly by augmenting the peptidyl transferase activity of the ribosome. Modification of Lys-34 is required for alleviation. The chain is Elongation factor P from Enterobacter sp. (strain 638).